Reading from the N-terminus, the 594-residue chain is UvrABC system protein C (594 aa).

The GIY-YIG domain occupies 14-91 (DSPGCYLHKD…IQENMPKYNI (78 aa)). The region spanning 196-231 (DKIIDDLRSKMLEASHNQEFERAAEYRDLISGIATM) is the UVR domain.

This sequence belongs to the UvrC family. In terms of assembly, interacts with UvrB in an incision complex.

The protein localises to the cytoplasm. In terms of biological role, the UvrABC repair system catalyzes the recognition and processing of DNA lesions. UvrC both incises the 5' and 3' sides of the lesion. The N-terminal half is responsible for the 3' incision and the C-terminal half is responsible for the 5' incision. The polypeptide is UvrABC system protein C (Streptococcus equi subsp. zooepidemicus (strain H70)).